The sequence spans 299 residues: tRNA pseudouridine synthase A (299 aa).

Asp-67 (nucleophile) is an active-site residue. A substrate-binding site is contributed by Tyr-125.

Belongs to the tRNA pseudouridine synthase TruA family. Homodimer.

It carries out the reaction uridine(38/39/40) in tRNA = pseudouridine(38/39/40) in tRNA. Formation of pseudouridine at positions 38, 39 and 40 in the anticodon stem and loop of transfer RNAs. This chain is tRNA pseudouridine synthase A, found in Parasynechococcus marenigrum (strain WH8102).